The sequence spans 201 residues: MAKNVLHTIRERGFLDGQFLIAMPGMFDTNFARTVIFVCAHSEDGAMGFILNRPQRLTFPDVLLHLQLLDPDEAIRLPSATREFQIQAGGPVETGRGFVLHSDDYLSDSSIPVSDDICLTATLDIVRAISRGEGPLKATMLLGYAGWGPGQLEAEITQNGWLTCPAQEELIFSRDLDEKYDRALALMGVSPAMLSTDSGHA.

The protein belongs to the UPF0301 (AlgH) family.

This Rhizobium meliloti (strain 1021) (Ensifer meliloti) protein is UPF0301 protein R00917.